Reading from the N-terminus, the 168-residue chain is Ribosome-binding factor A (168 aa).

The span at arginine 125–proline 138 shows a compositional bias: basic and acidic residues. The interval arginine 125–arginine 168 is disordered.

It belongs to the RbfA family. As to quaternary structure, monomer. Binds 30S ribosomal subunits, but not 50S ribosomal subunits or 70S ribosomes.

The protein resides in the cytoplasm. In terms of biological role, one of several proteins that assist in the late maturation steps of the functional core of the 30S ribosomal subunit. Associates with free 30S ribosomal subunits (but not with 30S subunits that are part of 70S ribosomes or polysomes). Required for efficient processing of 16S rRNA. May interact with the 5'-terminal helix region of 16S rRNA. This Mycolicibacterium gilvum (strain PYR-GCK) (Mycobacterium gilvum (strain PYR-GCK)) protein is Ribosome-binding factor A.